The chain runs to 538 residues: Probable folate-biopterin transporter 9, chloroplastic (538 aa).

The N-terminal 57 residues, 1–57 (MNNPLLSISNPVKFFKPPIPYRISLNTTINKKQKHQSKTLVVKSNKRSTTSLTSSVS), are a transit peptide targeting the chloroplast. 12 helical membrane passes run 85-105 (VLLC…WLAL), 129-149 (LPMV…IGGA), 152-172 (VPYI…LAIF), 178-198 (VLPS…ITEV), 220-240 (ALMA…YCLL), 246-266 (ILFL…LSSK), 309-329 (LIWI…VFCY), 339-359 (SVIG…TVVY), 370-390 (ALIH…YILV), 395-415 (LAFG…AEIL), 447-467 (LCLS…MIGI), and 479-499 (ILIQ…VPML).

Belongs to the major facilitator superfamily. Folate-biopterin transporter (TC 2.A.71) family.

The protein resides in the plastid. Its subcellular location is the chloroplast membrane. Could mediate folate transport. The protein is Probable folate-biopterin transporter 9, chloroplastic of Arabidopsis thaliana (Mouse-ear cress).